The primary structure comprises 372 residues: Silphinene synthase peniA (372 aa).

5 residues coordinate Mg(2+): Asp116, Glu121, Asn263, Ser267, and Glu271. A DDXXE motif motif is present at residues 116–121 (DDQFDE).

This sequence belongs to the terpene synthase family. It depends on Mg(2+) as a cofactor.

The catalysed reaction is (2E,6E)-farnesyl diphosphate = silphinene + diphosphate. It functions in the pathway secondary metabolite biosynthesis; terpenoid biosynthesis. Sesquiterpene cyclase; part of the gene cluster that mediates the biosynthesis of penifulvin A, a potent insecticidal sesquiterpene that features a [5.5.5.6]dioxafenestrane ring. Within the pathway, peniA catalyzes the first step and generates the angular triquinane scaffold silphinene via cyclization of the linear farnesyl pyrophosphate (FPP). The cytochrome P450 monooxygenase peniB and the flavin-dependent monooxygenase peniC then catalyze a series of oxidation reactions to transform silphinene into penifulvin A. In Penicillium patulum (Penicillium griseofulvum), this protein is Silphinene synthase peniA.